The chain runs to 638 residues: 1-deoxy-D-xylulose-5-phosphate synthase (638 aa).

Residues His-76 and 117–119 (AHS) contribute to the thiamine diphosphate site. Asp-148 is a binding site for Mg(2+). Thiamine diphosphate is bound by residues 149–150 (GS), Asn-177, Tyr-287, and Glu-369. Asn-177 contacts Mg(2+).

This sequence belongs to the transketolase family. DXPS subfamily. As to quaternary structure, homodimer. Mg(2+) serves as cofactor. Thiamine diphosphate is required as a cofactor.

It carries out the reaction D-glyceraldehyde 3-phosphate + pyruvate + H(+) = 1-deoxy-D-xylulose 5-phosphate + CO2. It functions in the pathway metabolic intermediate biosynthesis; 1-deoxy-D-xylulose 5-phosphate biosynthesis; 1-deoxy-D-xylulose 5-phosphate from D-glyceraldehyde 3-phosphate and pyruvate: step 1/1. In terms of biological role, catalyzes the acyloin condensation reaction between C atoms 2 and 3 of pyruvate and glyceraldehyde 3-phosphate to yield 1-deoxy-D-xylulose-5-phosphate (DXP). The sequence is that of 1-deoxy-D-xylulose-5-phosphate synthase from Rhodopseudomonas palustris (strain BisB5).